A 732-amino-acid chain; its full sequence is Polyribonucleotide nucleotidyltransferase (732 aa).

The Mg(2+) site is built by Asp515 and Asp521. A KH domain is found at 581–641 (PKLELFNVDP…KNVDAAKDYI (61 aa)). One can recognise an S1 motif domain in the interval 672–731 (GDEFTGSVKSVVDFGVFIELKDGVDGLLHISKIKSPLNVGDQVKVCVSEQKGNKISLSLV).

Belongs to the polyribonucleotide nucleotidyltransferase family. The cofactor is Mg(2+).

It is found in the cytoplasm. It catalyses the reaction RNA(n+1) + phosphate = RNA(n) + a ribonucleoside 5'-diphosphate. Its function is as follows. Involved in mRNA degradation. Catalyzes the phosphorolysis of single-stranded polyribonucleotides processively in the 3'- to 5'-direction. The sequence is that of Polyribonucleotide nucleotidyltransferase from Campylobacter concisus (strain 13826).